Here is a 168-residue protein sequence, read N- to C-terminus: ATP synthase subunit b, sodium ion specific (168 aa).

A helical transmembrane segment spans residues 9–29 (VSIDINMFWQIINFLILMFFF).

It belongs to the ATPase B chain family. As to quaternary structure, F-type ATPases have 2 components, F(1) - the catalytic core - and F(0) - the membrane proton channel. F(1) has five subunits: alpha(3), beta(3), gamma(1), delta(1), epsilon(1). F(0) has three main subunits: a(1), b(2) and c(10-14). The alpha and beta chains form an alternating ring which encloses part of the gamma chain. F(1) is attached to F(0) by a central stalk formed by the gamma and epsilon chains, while a peripheral stalk is formed by the delta and b chains.

Its subcellular location is the cell inner membrane. Functionally, f(1)F(0) ATP synthase produces ATP from ADP in the presence of a proton or sodium gradient. F-type ATPases consist of two structural domains, F(1) containing the extramembraneous catalytic core and F(0) containing the membrane proton channel, linked together by a central stalk and a peripheral stalk. During catalysis, ATP synthesis in the catalytic domain of F(1) is coupled via a rotary mechanism of the central stalk subunits to proton translocation. In terms of biological role, component of the F(0) channel, it forms part of the peripheral stalk, linking F(1) to F(0). This chain is ATP synthase subunit b, sodium ion specific (atpF), found in Propionigenium modestum.